A 121-amino-acid chain; its full sequence is Darcynin homolog (121 aa).

The protein belongs to the darcynin family.

The chain is Darcynin homolog from Streptomyces avermitilis (strain ATCC 31267 / DSM 46492 / JCM 5070 / NBRC 14893 / NCIMB 12804 / NRRL 8165 / MA-4680).